Reading from the N-terminus, the 335-residue chain is Aliphatic sulfonates import ATP-binding protein SsuB (335 aa).

A disordered region spans residues 29 to 61 (DGDAQDAAVYERDGGAHAPPFASGGAPPDGDRA). Residues 74–293 (VRLTRVSKRY…ARASAAFAAL (220 aa)) enclose the ABC transporter domain. ATP is bound at residue 106 to 113 (GRSGCGKS). The tract at residues 308–335 (APAAPNAAGPEGASRGRAAPASGLRWAV) is disordered.

Belongs to the ABC transporter superfamily. Aliphatic sulfonates importer (TC 3.A.1.17.2) family. The complex is composed of two ATP-binding proteins (SsuB), two transmembrane proteins (SsuC) and a solute-binding protein (SsuA).

The protein localises to the cell inner membrane. The enzyme catalyses ATP + H2O + aliphatic sulfonate-[sulfonate-binding protein]Side 1 = ADP + phosphate + aliphatic sulfonateSide 2 + [sulfonate-binding protein]Side 1.. Functionally, part of the ABC transporter complex SsuABC involved in aliphatic sulfonates import. Responsible for energy coupling to the transport system. This is Aliphatic sulfonates import ATP-binding protein SsuB from Burkholderia pseudomallei (strain 1710b).